The primary structure comprises 89 residues: Small ribosomal subunit protein bS18 (89 aa).

Belongs to the bacterial ribosomal protein bS18 family. In terms of assembly, part of the 30S ribosomal subunit. Forms a tight heterodimer with protein bS6.

In terms of biological role, binds as a heterodimer with protein bS6 to the central domain of the 16S rRNA, where it helps stabilize the platform of the 30S subunit. This is Small ribosomal subunit protein bS18 from Phocaeicola vulgatus (strain ATCC 8482 / DSM 1447 / JCM 5826 / CCUG 4940 / NBRC 14291 / NCTC 11154) (Bacteroides vulgatus).